A 312-amino-acid polypeptide reads, in one-letter code: Speedy protein A (312 aa).

The speedy/Ringo box; Required for CDK-binding stretch occupies residues 67–199 (RQEMTAFFKL…SHYIWQRERS (133 aa)). Position 221 is a phosphoserine (Ser221). Position 223 is a phosphothreonine (Thr223).

This sequence belongs to the Speedy/Ringo family. Interacts with CDK1. Interacts with CDK2. May interact with CDKN1B/KIP1. Identified in a complex with CDK2 and CDKN1B/KIP1, where it interacts primarily with CDK2.

It localises to the nucleus. Regulates the G1/S phase transition of the cell cycle by binding and activating CDK1 and CDK2. Contributes to CDK2 activation without promoting CDK2 phosphorylation, by inducing a conformation change of the CDK2 T-loop that obstructs the substrate-binding cleft prior to kinase activation. Interferes with CDKN1B-mediated inhibition of CDK2. Mediates cell survival during the DNA damage process through activation of CDK2. In Rattus norvegicus (Rat), this protein is Speedy protein A.